The chain runs to 235 residues: Peroxisomal membrane protein 11C (235 aa).

Over 1-91 (MSTLETTRAE…LPLVLLGKSK (91 aa)) the chain is Cytoplasmic. Residues 92–108 (NALLSTFLFLDQIVWLG) form a helical membrane-spanning segment. Over 109 to 206 (RTGIYKDKER…LLQLAPKKVT (98 aa)) the chain is Lumenal. The helical transmembrane segment at 207–226 (PRVTGAFGFASSLISCYQLL) threads the bilayer. Residues 227–235 (PSHPKSKMV) lie on the Cytoplasmic side of the membrane.

It belongs to the peroxin-11 family. As to quaternary structure, homooligomer. Interacts with ARC5 and FIS1B on peroxisomes. Expressed in roots and developing siliques.

The protein localises to the peroxisome membrane. Its function is as follows. Involved in peroxisomal proliferation. Promotes peroxisomal duplication, aggregation or elongation without fission. This is Peroxisomal membrane protein 11C (PEX11C) from Arabidopsis thaliana (Mouse-ear cress).